The chain runs to 246 residues: E3 ubiquitin-protein ligase MARCHF2 (246 aa).

Residues 56–116 form an RING-CH-type zinc finger; sequence DTPSDCPFCR…ELCHTEFAVE (61 aa). 8 residues coordinate Zn(2+): cysteine 64, cysteine 67, cysteine 80, cysteine 82, histidine 90, cysteine 93, cysteine 106, and cysteine 109. Residues 121-246 are required for interaction with IKBKG; that stretch reads PLTEWLKDPG…LKKVAEETPV (126 aa). The next 2 helical transmembrane spans lie at 138-158 and 175-195; these read LCCD…SGWL and AVGL…WTLV.

As to quaternary structure, interacts with STX6; the interaction promotes MARCHF2-mediated ubiquitination and degradation of CFTR. Interacts with MARCHF3. Interacts with GOPC/CAL; the interaction leads to CFTR ubiquitination and degradation. Interacts with CFTR; the interaction leads to CFTR ubiqtuitination and degradation. Interacts (via PDZ domain) with DLG1 (via PDZ domains); the interaction leads to DLG1 ubiqtuitination and degradation. Interacts with ERGIC3. Interacts with ADRB2. Interacts with IKBKG/NEMO; during the late stages of macrophage viral and bacterial infection; the interaction leads to ubiquitination and degradation of IKBKG/NEMO. Ubiquitously expressed. Present in liver (at protein level).

It localises to the endoplasmic reticulum membrane. The protein localises to the lysosome membrane. The protein resides in the endosome membrane. Its subcellular location is the golgi apparatus membrane. It is found in the cytoplasm. It localises to the cell membrane. It catalyses the reaction S-ubiquitinyl-[E2 ubiquitin-conjugating enzyme]-L-cysteine + [acceptor protein]-L-lysine = [E2 ubiquitin-conjugating enzyme]-L-cysteine + N(6)-ubiquitinyl-[acceptor protein]-L-lysine.. Its pathway is protein modification; protein ubiquitination. In terms of biological role, E3 ubiquitin-protein ligase that may mediate ubiquitination of TFRC and CD86, and promote their subsequent endocytosis and sorting to lysosomes via multivesicular bodies. E3 ubiquitin ligases accept ubiquitin from an E2 ubiquitin-conjugating enzyme in the form of a thioester and then directly transfer the ubiquitin to targeted substrates. Together with GOPC/CAL mediates the ubiquitination and lysosomal degradation of CFTR. Ubiquitinates and therefore mediates the degradation of DLG1. Regulates the intracellular trafficking and secretion of alpha1-antitrypsin/SERPINA1 and HP/haptoglobin via ubiquitination and degradation of the cargo receptor ERGIC3. Negatively regulates the antiviral and antibacterial immune response by repression of the NF-kB and type 1 IFN signaling pathways, via MARCHF2-mediated K48-linked polyubiquitination of IKBKG/NEMO, resulting in its proteasomal degradation. May be involved in endosomal trafficking through interaction with STX6. The polypeptide is E3 ubiquitin-protein ligase MARCHF2 (Marchf2) (Rattus norvegicus (Rat)).